Here is a 302-residue protein sequence, read N- to C-terminus: Polyamine aminopropyltransferase (302 aa).

Residues 4–239 (WTWHLEWQTP…GLWGFIYASD (236 aa)) enclose the PABS domain. Glutamine 33 provides a ligand contact to S-methyl-5'-thioadenosine. Residues histidine 64 and glutamate 88 each contribute to the spermidine site. S-methyl-5'-thioadenosine contacts are provided by residues aspartate 108 and 140–141 (DG). Aspartate 158 (proton acceptor) is an active-site residue. Proline 167 is a binding site for S-methyl-5'-thioadenosine.

Belongs to the spermidine/spermine synthase family. As to quaternary structure, homodimer or homotetramer.

Its subcellular location is the cytoplasm. The enzyme catalyses S-adenosyl 3-(methylsulfanyl)propylamine + putrescine = S-methyl-5'-thioadenosine + spermidine + H(+). It functions in the pathway amine and polyamine biosynthesis; spermidine biosynthesis; spermidine from putrescine: step 1/1. Functionally, catalyzes the irreversible transfer of a propylamine group from the amino donor S-adenosylmethioninamine (decarboxy-AdoMet) to putrescine (1,4-diaminobutane) to yield spermidine. The sequence is that of Polyamine aminopropyltransferase from Sulfolobus acidocaldarius (strain ATCC 33909 / DSM 639 / JCM 8929 / NBRC 15157 / NCIMB 11770).